Here is a 34-residue protein sequence, read N- to C-terminus: Cytochrome b6-f complex subunit 8 (34 aa).

The chain crosses the membrane as a helical span at residues leucine 3–valine 23.

Belongs to the PetN family. In terms of assembly, the 4 large subunits of the cytochrome b6-f complex are cytochrome b6, subunit IV (17 kDa polypeptide, PetD), cytochrome f and the Rieske protein, while the 4 small subunits are PetG, PetL, PetM and PetN. The complex functions as a dimer.

Its subcellular location is the cellular thylakoid membrane. In terms of biological role, component of the cytochrome b6-f complex, which mediates electron transfer between photosystem II (PSII) and photosystem I (PSI), cyclic electron flow around PSI, and state transitions. In Synechococcus elongatus (strain ATCC 33912 / PCC 7942 / FACHB-805) (Anacystis nidulans R2), this protein is Cytochrome b6-f complex subunit 8.